Consider the following 538-residue polypeptide: Chaperonin GroEL (538 aa).

Residues T29 to P32, D86 to T90, G413, N476 to A478, and D492 each bind ATP.

The protein belongs to the chaperonin (HSP60) family. As to quaternary structure, forms a cylinder of 14 subunits composed of two heptameric rings stacked back-to-back. Interacts with the co-chaperonin GroES.

It localises to the cytoplasm. The enzyme catalyses ATP + H2O + a folded polypeptide = ADP + phosphate + an unfolded polypeptide.. In terms of biological role, together with its co-chaperonin GroES, plays an essential role in assisting protein folding. The GroEL-GroES system forms a nano-cage that allows encapsulation of the non-native substrate proteins and provides a physical environment optimized to promote and accelerate protein folding. The protein is Chaperonin GroEL of Staphylococcus aureus (strain USA300).